Reading from the N-terminus, the 426-residue chain is Glutamate-1-semialdehyde 2,1-aminomutase (426 aa).

Lysine 265 bears the N6-(pyridoxal phosphate)lysine mark.

This sequence belongs to the class-III pyridoxal-phosphate-dependent aminotransferase family. HemL subfamily. As to quaternary structure, homodimer. Pyridoxal 5'-phosphate serves as cofactor.

The protein resides in the cytoplasm. It catalyses the reaction (S)-4-amino-5-oxopentanoate = 5-aminolevulinate. Its pathway is porphyrin-containing compound metabolism; protoporphyrin-IX biosynthesis; 5-aminolevulinate from L-glutamyl-tRNA(Glu): step 2/2. This Salmonella gallinarum (strain 287/91 / NCTC 13346) protein is Glutamate-1-semialdehyde 2,1-aminomutase.